Reading from the N-terminus, the 156-residue chain is 1-methylthio-D-xylulose 5-phosphate methylsulfurylase (156 aa).

The 68-residue stretch at 55 to 122 (YFEVGPGGHS…ADEALGFLCM (68 aa)) folds into the Cupin type-2 domain. Residues glutamate 67, histidine 69, histidine 73, and histidine 107 each contribute to the Mn(2+) site. Residue cysteine 121 is part of the active site.

It carries out the reaction S-methyl-1-thio-D-xylulose 5-phosphate + glutathione = S-(methylsulfanyl)glutathione + 1-deoxy-D-xylulose 5-phosphate. The enzyme catalyses S-(methylsulfanyl)glutathione + AH2 = methanethiol + glutathione + A. It functions in the pathway amino-acid biosynthesis; L-methionine biosynthesis via salvage pathway. Its pathway is metabolic intermediate biosynthesis; 1-deoxy-D-xylulose 5-phosphate biosynthesis. Catalyzes the formation of S-(methylsulfanyl)glutathione and 1-deoxy-D-xylulose 5-phosphate (DXP) from 1-methylthioxylulose 5-phosphate (MTXu-5P). The S-(methylsulfanyl)glutathione is reductively cleaved to relase methanethiol in a second reaction. Involved in the MTA-isoprenoid shunt of the methionine salvage pathway. This is 1-methylthio-D-xylulose 5-phosphate methylsulfurylase from Rhodospirillum rubrum (strain ATCC 11170 / ATH 1.1.1 / DSM 467 / LMG 4362 / NCIMB 8255 / S1).